The following is a 269-amino-acid chain: Ribonuclease HII (269 aa).

The region spanning 83–269 (YLIAGVDEVG…HRMSFLTNIL (187 aa)) is the RNase H type-2 domain. Positions 89, 90, and 185 each coordinate a divalent metal cation.

The protein belongs to the RNase HII family. Mn(2+) serves as cofactor. It depends on Mg(2+) as a cofactor.

Its subcellular location is the cytoplasm. It catalyses the reaction Endonucleolytic cleavage to 5'-phosphomonoester.. Functionally, endonuclease that specifically degrades the RNA of RNA-DNA hybrids. The protein is Ribonuclease HII of Clostridium botulinum (strain Langeland / NCTC 10281 / Type F).